The following is a 333-amino-acid chain: Holliday junction branch migration complex subunit RuvB (333 aa).

Residues 1–181 (MARILDNDLL…FGINGHMEYY (181 aa)) form a large ATPase domain (RuvB-L) region. Residues leucine 20, arginine 21, glycine 62, lysine 65, threonine 66, threonine 67, 128-130 (EDY), arginine 171, tyrosine 181, and arginine 218 each bind ATP. Residue threonine 66 participates in Mg(2+) binding. The tract at residues 130–148 (YYIDIMIGAGETSRSVHLD) is presensor-1 beta-hairpin. A small ATPAse domain (RuvB-S) region spans residues 182–252 (ELPDLTEIVE…IADQALTMLD (71 aa)). Positions 255 to 333 (HEGLDYVDQK…HMGYDYTRDN (79 aa)) are head domain (RuvB-H). 4 residues coordinate DNA: arginine 291, arginine 310, arginine 312, and arginine 315.

Belongs to the RuvB family. In terms of assembly, homohexamer. Forms an RuvA(8)-RuvB(12)-Holliday junction (HJ) complex. HJ DNA is sandwiched between 2 RuvA tetramers; dsDNA enters through RuvA and exits via RuvB. Only 4 subunits contact one DNA strand at any time. Two adjacent subunits are contacted by domain III of RuvA. An RuvB hexamer assembles on each DNA strand where it exits the tetramer. Each RuvB hexamer is contacted by two RuvA subunits (via domain III) on 2 adjacent RuvB subunits; this complex drives branch migration. In the full resolvosome a probable DNA-RuvA(4)-RuvB(12)-RuvC(2) complex forms which resolves the HJ.

The protein localises to the cytoplasm. It catalyses the reaction ATP + H2O = ADP + phosphate + H(+). Binding of domain III of RuvA to a single subunit of the RuvB hexamer activates the ATPase 2 subunits away and nucleotide exchange in the adjacent subunit. Its function is as follows. The RuvA-RuvB-RuvC complex processes Holliday junction (HJ) DNA during genetic recombination and DNA repair, while the RuvA-RuvB complex plays an important role in the rescue of blocked DNA replication forks via replication fork reversal (RFR). Catalyzes branch migration on Holliday junction (HJ) DNA in complex with RuvA from S.typhimurim and ATP. RuvA specifically binds to HJ cruciform DNA, conferring on it an open structure. The RuvB hexamer acts as an ATP-dependent pump, pulling dsDNA into and through the RuvAB complex. Forms 2 homohexamers on either side of HJ DNA bound by 1 or 2 RuvA tetramers; 4 subunits per hexamer contact DNA at a time. Coordinated motions by a converter formed by DNA-disengaged RuvB subunits stimulates ATP hydrolysis and nucleotide exchange. Immobilization of the converter enables RuvB to convert the ATP-contained energy into a lever motion, pulling 2 nucleotides of DNA out of the RuvA tetramer per ATP hydrolyzed, thus driving DNA branch migration. The RuvB motors rotate together with the DNA substrate, which together with the progressing nucleotide cycle forms the mechanistic basis for DNA recombination by continuous branch migration. Branch migration allows RuvC to scan DNA until it finds its consensus sequence, where it cleaves and resolves cruciform DNA. This Streptococcus thermophilus (strain ATCC BAA-250 / LMG 18311) protein is Holliday junction branch migration complex subunit RuvB.